The following is a 1686-amino-acid chain: Thrombospondin type-1 domain-containing protein 7A (1686 aa).

Residues 1–36 form the signal peptide; that stretch reads MGLASRAPGKGGTSAGALASLFRVALLFFGLWDVQT. Residues 37–1635 lie on the Extracellular side of the membrane; the sequence is QTVANTRPTY…FGPDGKLKTW (1599 aa). 3 consecutive TSP type-1 domains span residues 44–103, 107–181, and 183–236; these read PTYI…RVCD, ELYD…IPCP, and DCVV…GKCE. An N-linked (GlcNAc...) asparagine glycan is attached at Asn223. Residues 257–321 form a disordered region; that stretch reads IRQARDTGEA…EKKRMRDPET (65 aa). Basic and acidic residues-rich tracts occupy residues 259-272 and 294-321; these read QARD…PKAE and EKKE…DPET. TSP type-1 domains are found at residues 385 to 441, 448 to 535, 537 to 596, 656 to 717, 718 to 797, 799 to 859, 860 to 932, 934 to 985, 988 to 1061, 1063 to 1123, 1124 to 1191, 1193 to 1247, 1248 to 1311, 1313 to 1368, 1369 to 1439, and 1441 to 1502; these read DCEV…SPQG, VVYN…IPCP, ECEV…PSCY, DCVL…HPCT, VYHW…LPCK, DCVV…SVCP, GYRW…LPCQ, DCQL…QYCP, KYNA…IPCP, DCKL…SDCS, QYVW…LPCP, DCVL…SNCF, HYSY…VECP, NCQL…KPCF, SWRY…VPCP, and ECYL…GQCY. 3 disulfide bridges follow: Cys460–Cys530, Cys480–Cys534, and Cys491–Cys519. N-linked (GlcNAc...) asparagine glycosylation occurs at Asn475. An N-linked (GlcNAc...) asparagine glycan is attached at Asn525. Intrachain disulfides connect Cys657–Cys699 and Cys668–Cys672. N-linked (GlcNAc...) asparagine glycosylation occurs at Asn701. Intrachain disulfides connect Cys711-Cys716, Cys729-Cys792, Cys756-Cys796, Cys767-Cys780, Cys800-Cys842, Cys811-Cys815, and Cys852-Cys858. N-linked (GlcNAc...) asparagine glycosylation occurs at Asn739. N-linked (GlcNAc...) asparagine glycosylation occurs at Asn996. Cystine bridges form between Cys1000-Cys1056, Cys1022-Cys1060, Cys1033-Cys1046, Cys1064-Cys1101, Cys1075-Cys1079, and Cys1118-Cys1122. Asn1071 carries an N-linked (GlcNAc...) asparagine glycan. An N-linked (GlcNAc...) asparagine glycan is attached at Asn1212. Cysteines 1240 and 1246 form a disulfide. Residue Asn1252 is glycosylated (N-linked (GlcNAc...) asparagine). 12 disulfide bridges follow: Cys1259/Cys1306, Cys1267/Cys1310, Cys1278/Cys1291, Cys1314/Cys1352, Cys1325/Cys1329, Cys1362/Cys1367, Cys1378/Cys1434, Cys1385/Cys1438, Cys1396/Cys1415, Cys1442/Cys1486, Cys1453/Cys1457, and Cys1496/Cys1501. Residue Asn1303 is glycosylated (N-linked (GlcNAc...) asparagine). A glycan (N-linked (GlcNAc...) asparagine) is linked at Asn1393. N-linked (GlcNAc...) asparagine glycosylation is present at Asn1527. The helical transmembrane segment at 1636–1656 threads the bilayer; sequence VYGVAAGAFVLLVFIVSMTYL. The Cytoplasmic segment spans residues 1657-1686; the sequence is ACKKPKKPQRRQMNNRLKPLTLAYDGDADM.

Extensively N-glycosylated.

The protein resides in the cell membrane. It is found in the cell projection. In terms of biological role, required for normal sprouting angiogenesis and normal embryonic development of intersegmental vessels (ISV). Required for normal function of the glomerular filtration barrier. Required for normal axon outgrowth on embryonic motor neurons at the level of the horizontal myoseptum. Required for normal expression of notch1b, suggesting that its functions in angiogenesis and neuron outgrowth are due to decreased expression of notch1b. Plays a role in actin cytoskeleton rearrangement. This chain is Thrombospondin type-1 domain-containing protein 7A, found in Danio rerio (Zebrafish).